The primary structure comprises 277 residues: Large ribosomal subunit protein uL2 (277 aa).

Residues Arg212–Lys277 are disordered. Residues Thr254 to Lys277 show a composition bias toward basic residues.

It belongs to the universal ribosomal protein uL2 family. In terms of assembly, part of the 50S ribosomal subunit. Forms a bridge to the 30S subunit in the 70S ribosome.

In terms of biological role, one of the primary rRNA binding proteins. Required for association of the 30S and 50S subunits to form the 70S ribosome, for tRNA binding and peptide bond formation. It has been suggested to have peptidyltransferase activity; this is somewhat controversial. Makes several contacts with the 16S rRNA in the 70S ribosome. In Leuconostoc citreum (strain KM20), this protein is Large ribosomal subunit protein uL2.